A 350-amino-acid polypeptide reads, in one-letter code: Twinfilin-1 (350 aa).

ADF-H domains follow at residues 4–139 (QTGI…KYLA) and 177–313 (GIAF…EEVH). The segment at 316 to 350 (QHAHKQNFAKPKGPAGKRGIRRLIRGPAEAETAND) is disordered.

This sequence belongs to the actin-binding proteins ADF family. Twinfilin subfamily. In terms of assembly, interacts with G-actin; ADP-actin form.

It is found in the cytoplasm. It localises to the cytoskeleton. Its function is as follows. Actin-binding protein involved in motile and morphological processes. Inhibits actin polymerization, likely by sequestering G-actin. In Xenopus tropicalis (Western clawed frog), this protein is Twinfilin-1 (twf1).